The chain runs to 245 residues: Tetraspanin-6 (245 aa).

Over 1–19 (MASPSRRLQTKPVITCFKS) the chain is Cytoplasmic. Residues 20 to 40 (VLLIYTFIFWITGVILLAVGI) traverse the membrane as a helical segment. Residues 41–59 (WGKVSLENYFSLLNEKATN) lie on the Extracellular side of the membrane. Residues 60–80 (VPFVLIATGTVIILLGTFGCF) traverse the membrane as a helical segment. The Cytoplasmic segment spans residues 81 to 93 (ATCRASAWMLKLY). A helical membrane pass occupies residues 94–114 (AMFLTLIFLVELVAAIVGFVF). Residues 115–208 (RHEIKNSFKN…IKVMTIIESE (94 aa)) are Extracellular-facing. A glycan (N-linked (GlcNAc...) asparagine) is linked at Asn-134. A helical transmembrane segment spans residues 209–229 (MGVVAGISFGVACFQLIGIFL). Residues 230-245 (AYCLSRAITNNQYEIV) are Cytoplasmic-facing.

This sequence belongs to the tetraspanin (TM4SF) family.

Its subcellular location is the membrane. In Pongo abelii (Sumatran orangutan), this protein is Tetraspanin-6 (TSPAN6).